Consider the following 95-residue polypeptide: Large ribosomal subunit protein eL31 (95 aa).

It belongs to the eukaryotic ribosomal protein eL31 family.

The sequence is that of Large ribosomal subunit protein eL31 (rpl31e) from Pyrococcus horikoshii (strain ATCC 700860 / DSM 12428 / JCM 9974 / NBRC 100139 / OT-3).